Here is a 324-residue protein sequence, read N- to C-terminus: Succinylglutamate desuccinylase (324 aa).

Zn(2+)-binding residues include His-53, Glu-56, and His-148. Glu-211 is a catalytic residue.

Belongs to the AspA/AstE family. Succinylglutamate desuccinylase subfamily. Zn(2+) serves as cofactor.

The enzyme catalyses N-succinyl-L-glutamate + H2O = L-glutamate + succinate. The protein operates within amino-acid degradation; L-arginine degradation via AST pathway; L-glutamate and succinate from L-arginine: step 5/5. In terms of biological role, transforms N(2)-succinylglutamate into succinate and glutamate. In Acinetobacter baumannii (strain SDF), this protein is Succinylglutamate desuccinylase.